Consider the following 238-residue polypeptide: Type III secretion protein hrcQa (238 aa).

A hrcQa-C region spans residues 66–238; the sequence is DAEALLSLLG…SHEEHRHHEY (173 aa).

Interacts with hrcQb.

The protein localises to the cell inner membrane. Functionally, component of the type III secretion system, which is required for effector protein delivery, parasitism, and pathogenicity. Probably participates in the formation of a C-ring-like assembly along with hrcQb. This is Type III secretion protein hrcQa (hrcQa) from Pseudomonas savastanoi pv. phaseolicola (Pseudomonas syringae pv. phaseolicola).